We begin with the raw amino-acid sequence, 92 residues long: Small ribosomal subunit protein uS19 (92 aa).

Belongs to the universal ribosomal protein uS19 family.

In terms of biological role, protein S19 forms a complex with S13 that binds strongly to the 16S ribosomal RNA. The chain is Small ribosomal subunit protein uS19 (rpsS) from Geobacillus stearothermophilus (Bacillus stearothermophilus).